Reading from the N-terminus, the 793-residue chain is Protein smoothened (793 aa).

Residues 1–30 (MAAGRPVRGPELAPRRLLQLLLLVLLGGRG) form the signal peptide. The Extracellular segment spans residues 31–237 (RGAALSGNVT…EAEHQDMHSY (207 aa)). The segment at 35–61 (LSGNVTGPGPRSAGGSARRNAPVTSPP) is disordered. The N-linked (GlcNAc...) asparagine glycan is linked to Asn38. Cystine bridges form between Cys68-Cys182, Cys74-Cys138, Cys82-Cys131, Cys122-Cys158, and Cys151-Cys173. Residues 69 to 185 (GRAAHCEPLR…DHFPEGCPNE (117 aa)) enclose the FZ domain. Residue Asp99 coordinates cholesterol. Asn192 is a glycosylation site (N-linked (GlcNAc...) asparagine). Disulfide bonds link Cys197–Cys217, Cys221–Cys299, and Cys318–Cys394. The chain crosses the membrane as a helical span at residues 238 to 258 (IAAFGAVTGLCTLFTLATFVA). At 259–266 (DWRNSNRY) the chain is on the cytoplasmic side. A helical transmembrane segment spans residues 267–287 (PAVILFYVNACFFVGSIGWLA). Topologically, residues 288–318 (QFMDGARREIVCRADGTMRFGEPTSSETLSC) are extracellular. A helical membrane pass occupies residues 319–339 (VIIFVIVYYALMAGVVWFVVL). At 340–362 (TYAWHTSFKALGTTYQPLSGKTS) the chain is on the cytoplasmic side. Residues 363-383 (YFHLLTWSLPFVLTVAILAVA) traverse the membrane as a helical segment. Residues 384 to 406 (QVDGDSVSGICFVGYKNYRYRAG) lie on the Extracellular side of the membrane. Tyr398 contributes to the cholesterol binding site. Residues 407 to 427 (FVLAPIGLVLIVGGYFLIRGV) form a helical membrane-spanning segment. The Cytoplasmic segment spans residues 428–455 (MTLFSIKSNHPGLLSEKAASKINETMLR). Residues 456 to 476 (LGIFGFLAFGFVLITFSCHFY) form a helical membrane-spanning segment. Residues 477–528 (DFFNQAEWERSFRDYVLCQANVTIGLPTKKPIPDCEIKNRPSLLVEKINLFA) are Extracellular-facing. Cys494 and Cys511 are disulfide-bonded. An N-linked (GlcNAc...) asparagine glycan is attached at Asn497. A helical transmembrane segment spans residues 529 to 549 (MFGTGIAMSTWVWTKATLLIW). Residues 542 to 573 (TKATLLIWRRTWCRLTGHSDDEPKRIKKSKMI) form an interaction with BBS5 and BBS7 region. Topologically, residues 550–793 (RRTWCRLTGH…AELLDADSDF (244 aa)) are cytoplasmic. Phosphoserine is present on residues Ser560, Ser578, and Ser594. Residues 574–657 (AKAFSKRREL…TPVPPEEQAN (84 aa)) form a required for interaction with PRKACA region. Residues 585–597 (QNPGQELSFSMHT) are interaction with DLG5. The residue at position 597 (Thr597) is a Phosphothreonine. Residues Ser599 and Ser642 each carry the phosphoserine modification. Residues Thr644 and Thr648 each carry the phosphothreonine modification. The residue at position 666 (Ser666) is a Phosphoserine. Over residues 674 to 684 (GRKKKRRKRKK) the composition is skewed to basic residues. The interval 674–702 (GRKKKRRKRKKEVCPLGPAPELHHSAPVP) is disordered.

It belongs to the G-protein coupled receptor Fz/Smo family. As to quaternary structure, homodimer. Interacts (via C-terminus) with protein kinase A catalytic subunit PRKACA; interacts with free PRKACA subunits and the interaction leads to sequestration of PRKACA at the membrane, preventing PRKACA-mediated phosphorylation of GLI transcription factors. Interacts with ARRB2. Interacts with KIF7. Interacts with BBS5 and BBS7; the interactions are indicative for the association of SMO with the BBsome complex to facilitate ciliary localization of SMO. Interacts with DLG5 and SDCBP. Interacts with GAS8/DRC4. In terms of processing, phosphorylation by GRK kinases is required for interaction with protein kinase A catalytic subunit PRKACA. In terms of tissue distribution, in embryo, found in the early neural folds and neural tube, pre-somitic mesoderm and somites, developing limb bud, gut, eye, testes, cartilage, muscle, lung, epiglottis, thymus, tongue, jaw, taste buds, teeth, and skin. In adult, found in multiple tissues including heart, brain, liver, lung, skeletal muscle, kidney and testis.

It localises to the cell membrane. Its subcellular location is the cell projection. The protein localises to the cilium. G protein-coupled receptor which associates with the patched protein (PTCH) to transduce hedgehog protein signaling. Binding of sonic hedgehog (SHH) to its receptor patched prevents inhibition of smoothened (SMO) by patched. When active, SMO binds to and sequesters protein kinase A catalytic subunit PRKACA at the cell membrane, preventing PRKACA-mediated phosphorylation of GLI transcription factors which releases the GLI proteins from PRKACA-mediated inhibition and allows for transcriptional activation of hedgehog pathway target genes. Required for the accumulation of KIF7, GLI2 and GLI3 in the cilia. Interacts with DLG5 at the ciliary base to induce the accumulation of KIF7 and GLI2 at the ciliary tip for GLI2 activation. The polypeptide is Protein smoothened (Smo) (Rattus norvegicus (Rat)).